The sequence spans 588 residues: Phosphatidylinositol-3,5-bisphosphate 3-phosphatase mtm-1 (588 aa).

One can recognise a GRAM domain in the interval I20 to G91. In terms of domain architecture, Myotubularin phosphatase spans G164 to Y543. N293, N316, and I317 together coordinate a 1,2-diacyl-sn-glycero-3-phospho-(1D-myo-inositol-3,5-bisphosphate). The a 1,2-diacyl-sn-glycero-3-phospho-(1D-myo-inositol-3-phosphate) site is built by N293, N316, and I317. C378 serves as the catalytic Phosphocysteine intermediate. The a 1,2-diacyl-sn-glycero-3-phospho-(1D-myo-inositol-3,5-bisphosphate) site is built by S379, D380, G381, W382, D383, R384, K420, and R424. A 1,2-diacyl-sn-glycero-3-phospho-(1D-myo-inositol-3-phosphate)-binding residues include S379, D380, G381, W382, D383, and R384. S379 contacts phosphate. Residues G381, W382, D383, and R384 each contribute to the phosphate site. Residue R424 coordinates a 1,2-diacyl-sn-glycero-3-phospho-(1D-myo-inositol-3-phosphate). Residues A563–A588 are a coiled coil.

The protein belongs to the protein-tyrosine phosphatase family. Non-receptor class myotubularin subfamily. In terms of tissue distribution, expressed in embryo, larva and in adults. Expressed in a few head and tail neurons. Expressed in hypodermis, body wall and pharyngeal muscles, sheath cells, vulva, distal tip cells and coelomocytes.

The protein localises to the cell membrane. It is found in the cell projection. It localises to the phagocytic cup. Its subcellular location is the apical cell membrane. The protein resides in the cytoplasmic granule membrane. The catalysed reaction is a 1,2-diacyl-sn-glycero-3-phospho-(1D-myo-inositol-3,5-bisphosphate) + H2O = a 1,2-diacyl-sn-glycero-3-phospho-(1D-myo-inositol-5-phosphate) + phosphate. It carries out the reaction a 1,2-diacyl-sn-glycero-3-phospho-(1D-myo-inositol-3-phosphate) + H2O = a 1,2-diacyl-sn-glycero-3-phospho-(1D-myo-inositol) + phosphate. The enzyme catalyses 1,2-dioctanoyl-sn-glycero-3-phospho-(1-D-myo-inositol-3-phosphate) + H2O = 1,2-dioctanoyl-sn-glycero-3-phospho-(1D-myo-inositol) + phosphate. Its function is as follows. Lipid phosphatase that specifically dephosphorylates phosphatidylinositol 3-phosphate (PI3P) and phosphatidylinositol 3,5-bisphosphate (PI(3,5)P2). Negatively regulates accumulation of PI3P on intracellular vesicles. Negatively regulates phagocytosis of apoptotic cells probably by limiting the recruitment and/or the activation of ced-5, ced-2 and ced-12 complex. In addition, may positively regulate phagosome maturation by promoting recycling of apoptotic receptor ced-1 back to the plasma membrane. Essential for embryonic and larval development. May promote migration of distal tip cells. This chain is Phosphatidylinositol-3,5-bisphosphate 3-phosphatase mtm-1, found in Caenorhabditis elegans.